A 169-amino-acid polypeptide reads, in one-letter code: Allophycocyanin subunit beta-18 (169 aa).

An N4-methylasparagine modification is found at asparagine 72. Cysteine 82 provides a ligand contact to (2R,3E)-phycocyanobilin.

This sequence belongs to the phycobiliprotein family. In terms of assembly, heterodimer of ApcE and this beta chain. Post-translationally, contains one covalently linked bilin chromophore.

It localises to the cellular thylakoid membrane. In terms of biological role, a variant beta-allophycocyanin (AP) which forms a complex with ApcE, a phycobilisome terminal emitter that influences energy transfer to photosystem II. The sequence is that of Allophycocyanin subunit beta-18 (apcF) from Synechocystis sp. (strain ATCC 27184 / PCC 6803 / Kazusa).